Reading from the N-terminus, the 422-residue chain is Killer cell immunoglobulin-like receptor 3DL1 (422 aa).

The signal sequence occupies residues 1 to 21 (MMFEFLSLLCSGFFLVQRMSA). At 22–329 (HMGSYDKPFL…KNLHIQIGLL (308 aa)) the chain is on the extracellular side. 3 consecutive Ig-like C2-type domains span residues 42 to 100 (GQNV…HHQY), 135 to 202 (GENV…YNHS), and 237 to 300 (EQNM…FKNS). N-linked (GlcNAc...) asparagine glycosylation is present at Asn-44. Cys-49 and Cys-95 are joined by a disulfide. An N-linked (GlcNAc...) asparagine glycan is attached at Asn-137. Cys-142 and Cys-195 are oxidised to a cystine. N-linked (GlcNAc...) asparagine glycosylation is found at Asn-200 and Asn-239. Cys-244 and Cys-293 form a disulfide bridge. Asn-299 carries an N-linked (GlcNAc...) asparagine glycan. Residues 330–350 (VTMVLVIVVIIIIIIIIIIII) traverse the membrane as a helical segment. Topologically, residues 351 to 422 (YYYYFSKKSS…DTVVYTEVMI (72 aa)) are cytoplasmic.

It belongs to the immunoglobulin superfamily.

The protein localises to the cell membrane. Its function is as follows. Receptor on natural killer (NK) cells. Inhibits the activity of NK cells thus preventing cell lysis. This chain is Killer cell immunoglobulin-like receptor 3DL1 (Kir3dl1), found in Rattus norvegicus (Rat).